An 872-amino-acid chain; its full sequence is Translation initiation factor IF-2 (872 aa).

The span at 130–155 (AEEEAARAAEEEAARLAEEEAARRAA) shows a compositional bias: basic and acidic residues. A disordered region spans residues 130-282 (AEEEAARAAE…RERERLKHMQ (153 aa)). Residues 156-181 (EPQSEPEAAAPAAEPVAPTAPVAAAP) show a composition bias toward low complexity. Pro residues predominate over residues 182–194 (APAPATPVAPAQP). A compositionally biased stretch (low complexity) spans 195-211 (KPVAAAAPAGDATAVPR). A compositionally biased stretch (basic and acidic residues) spans 271 to 282 (RARERERLKHMQ). Positions 371-539 (TRPPVVTVMG…AILLQAEILD (169 aa)) constitute a tr-type G domain. A G1 region spans residues 380 to 387 (GHVDHGKT). Residue 380 to 387 (GHVDHGKT) participates in GTP binding. Residues 405–409 (GITQH) are G2. Residues 427 to 430 (DTPG) are G3. GTP is bound by residues 427 to 431 (DTPGH) and 481 to 484 (NKID). Residues 481-484 (NKID) form a G4 region. Residues 517–519 (SAK) form a G5 region.

This sequence belongs to the TRAFAC class translation factor GTPase superfamily. Classic translation factor GTPase family. IF-2 subfamily.

The protein resides in the cytoplasm. Functionally, one of the essential components for the initiation of protein synthesis. Protects formylmethionyl-tRNA from spontaneous hydrolysis and promotes its binding to the 30S ribosomal subunits. Also involved in the hydrolysis of GTP during the formation of the 70S ribosomal complex. The protein is Translation initiation factor IF-2 of Paramagnetospirillum magneticum (strain ATCC 700264 / AMB-1) (Magnetospirillum magneticum).